A 567-amino-acid chain; its full sequence is Cytochrome P450 monooxygenase 231 (567 aa).

Residues 3-23 (VSTNELAILAIVLLATGVLFY) form a helical membrane-spanning segment. N-linked (GlcNAc...) asparagine glycans are attached at residues N81 and N223. Residue C475 coordinates heme.

Belongs to the cytochrome P450 family. Heme serves as cofactor.

Its subcellular location is the membrane. The protein operates within secondary metabolite biosynthesis. In terms of biological role, cytochrome P450 monooxygenase that is able to use anthracene, carbazole, pyrene, and phenanthrene as substrates for oxidation. These multifunctional properties against a series of polycyclic aromatic hydrocarbons (PAHs) suggest that CYP231 would play important roles, at least in part, in fungal metabolic systems involved in xenobiotic detoxification. This chain is Cytochrome P450 monooxygenase 231, found in Postia placenta (strain ATCC 44394 / Madison 698-R) (Brown rot fungus).